The sequence spans 118 residues: Small ribosomal subunit protein uS13 (118 aa).

A disordered region spans residues 94–118 (SLPVRGQRTKTNARTRKGPRRPIKR).

It belongs to the universal ribosomal protein uS13 family. As to quaternary structure, part of the 30S ribosomal subunit. Forms a loose heterodimer with protein S19. Forms two bridges to the 50S subunit in the 70S ribosome.

Functionally, located at the top of the head of the 30S subunit, it contacts several helices of the 16S rRNA. In the 70S ribosome it contacts the 23S rRNA (bridge B1a) and protein L5 of the 50S subunit (bridge B1b), connecting the 2 subunits; these bridges are implicated in subunit movement. Contacts the tRNAs in the A and P-sites. The protein is Small ribosomal subunit protein uS13 of Dichelobacter nodosus (strain VCS1703A).